Here is a 398-residue protein sequence, read N- to C-terminus: 1-deoxy-D-xylulose 5-phosphate reductoisomerase (398 aa).

NADPH-binding residues include threonine 10, glycine 11, serine 12, isoleucine 13, lysine 37, asparagine 38, and asparagine 124. Residue lysine 125 coordinates 1-deoxy-D-xylulose 5-phosphate. Residue glutamate 126 coordinates NADPH. Aspartate 150 contacts Mn(2+). Residues serine 151, glutamate 152, serine 186, and histidine 209 each contribute to the 1-deoxy-D-xylulose 5-phosphate site. Position 152 (glutamate 152) interacts with Mn(2+). Glycine 215 provides a ligand contact to NADPH. 4 residues coordinate 1-deoxy-D-xylulose 5-phosphate: serine 222, asparagine 227, lysine 228, and glutamate 231. Glutamate 231 lines the Mn(2+) pocket.

The protein belongs to the DXR family. As to quaternary structure, homodimer. Mg(2+) is required as a cofactor. Mn(2+) serves as cofactor.

The enzyme catalyses 2-C-methyl-D-erythritol 4-phosphate + NADP(+) = 1-deoxy-D-xylulose 5-phosphate + NADPH + H(+). It functions in the pathway isoprenoid biosynthesis; isopentenyl diphosphate biosynthesis via DXP pathway; isopentenyl diphosphate from 1-deoxy-D-xylulose 5-phosphate: step 1/6. Its function is as follows. Catalyzes the NADPH-dependent rearrangement and reduction of 1-deoxy-D-xylulose-5-phosphate (DXP) to 2-C-methyl-D-erythritol 4-phosphate (MEP). This chain is 1-deoxy-D-xylulose 5-phosphate reductoisomerase, found in Buchnera aphidicola subsp. Acyrthosiphon pisum (strain 5A).